A 370-amino-acid chain; its full sequence is 2-Hydroxyacid oxidase 1 (370 aa).

Positions 1–365 (MLPRLVCISD…DKTLVRKNPL (365 aa)) constitute an FMN hydroxy acid dehydrogenase domain. Residue Y26 coordinates glyoxylate. FMN contacts are provided by residues 79–81 (ATA), S108, and Q130. A glyoxylate-binding site is contributed by Y132. T158 is a binding site for FMN. R167 serves as a coordination point for glyoxylate. K184 carries the N6-succinyllysine modification. Residues S194 and S230 each carry the phosphoserine modification. K236 and S258 together coordinate FMN. Glyoxylate-binding residues include H260 and R263. H260 (proton acceptor) is an active-site residue. Residues 291–295 (DGGVR) and 314–315 (GR) contribute to the FMN site. Positions 368–370 (SKI) match the Microbody targeting signal motif.

Belongs to the FMN-dependent alpha-hydroxy acid dehydrogenase family. As to quaternary structure, homotetramer. FMN serves as cofactor. As to expression, liver.

The protein localises to the peroxisome matrix. It carries out the reaction a (2S)-2-hydroxycarboxylate + O2 = a 2-oxocarboxylate + H2O2. The enzyme catalyses glycolate + O2 = glyoxylate + H2O2. It catalyses the reaction glyoxylate + O2 + H2O = oxalate + H2O2 + H(+). The catalysed reaction is 2-hydroxyhexadecanoate + O2 = 2-oxohexadecanoate + H2O2. It carries out the reaction 2-hydroxyoctanoate + O2 = 2-oxooctanoate + H2O2. Its pathway is amino-acid biosynthesis; glycine biosynthesis. In terms of biological role, broad substrate specificity (S)-2-hydroxy-acid oxidase that preferentially oxidizes glycolate. The glyoxylate produced by the oxidation of glycolate can then be utilized by alanine-glyoxylate aminotransferase for the peroxisomal synthesis of glycine; this pathway appears to be an important step for the detoxification of glyoxylate which, if allowed to accumulate, may be metabolized to oxalate with formation of kidney stones. Can also catalyze the oxidation glyoxylate, and long chain hydroxyacids such as 2-hydroxyhexadecanoate and 2-hydroxyoctanoate. Active in vitro with the artificial electron acceptor 2,6-dichlorophenolindophenol (DCIP), but O2 is believed to be the physiological electron acceptor, leading to the production of H2O2. The chain is 2-Hydroxyacid oxidase 1 from Mus musculus (Mouse).